A 1862-amino-acid polypeptide reads, in one-letter code: Ankyrin-1 (1862 aa).

Residues 1-827 (MGFCKADAAT…DELVGSKAER (827 aa)) form an 89 kDa domain region. 23 ANK repeats span residues 40-69 (NGLN…ILET), 73-102 (KGNT…NVNA), 106-135 (KGFT…NQNV), 139-168 (DGFT…KGKV), 170-197 (LPAL…NPDV), 201-230 (TGFT…SVNF), 234-263 (NGIT…QIET), 267-296 (DELT…PIQA), 300-329 (NGLS…EIDD), 333-362 (DHLT…KPNS), 366-395 (NGFT…SIDA), 399-428 (SGLT…SPNV), 432-461 (KVET…KANA), 465-494 (DDQT…SPNL), 498-527 (AGHT…SQAC), 531-560 (KGFT…HPNA), 564-593 (NGLT…SPHS), 597-626 (NGYT…SANA), 630-659 (QGVT…NGNL), 663-692 (SGLT…TVDA), 696-725 (MGYT…DVNA), 729-758 (LGYS…SPNE), and 762-791 (NGTT…ETSV). Lysine 55 carries the phosphoserine modification. Residue asparagine 101 is modified to (3S)-3-hydroxyasparagine; by HIF1AN; partial. The residue at position 229 (asparagine 229) is a (3S)-3-hydroxyasparagine; by HIF1AN. Residue serine 425 is modified to Phosphoserine. (3S)-3-hydroxyasparagine; by HIF1AN occurs at positions 427 and 460. Asparagine 625 and asparagine 658 each carry (3S)-3-hydroxyasparagine; by HIF1AN. Aspartate 691 carries the (3S)-3-hydroxyaspartate; by HIF1AN modification. (3S)-3-hydroxyasparagine; by HIF1AN is present on asparagine 724. A Phosphoserine modification is found at serine 755. Asparagine 757 is modified ((3S)-3-hydroxyasparagine; by HIF1AN). Phosphoserine occurs at positions 777, 813, 830, and 852. A disordered region spans residues 812-834 (VSEDEGDELVGSKAERRDSRDVG). The span at 824–834 (KAERRDSRDVG) shows a compositional bias: basic and acidic residues. Phosphothreonine is present on threonine 862. Positions 872–900 (DQEQASKEYDEDSLIPSSPATETSDNISP) are disordered. Residues 886–900 (IPSSPATETSDNISP) show a composition bias toward polar residues. ZU5 domains follow at residues 909–1064 (FLVS…IMSR) and 1066–1212 (CQDY…LSDC). Position 957 is a phosphothreonine (threonine 957). Tyrosine 1069 carries the post-translational modification Phosphotyrosine. Serine 1078 bears the Phosphoserine mark. The UPA domain stretch occupies residues 1197–1331 (ANFTTNVSAR…PVKVRDSSRE (135 aa)). Phosphothreonine is present on residues threonine 1374 and threonine 1376. Residues serine 1386 and serine 1388 each carry the phosphoserine modification. The segment at 1387 to 1862 (ESRLGFTSDT…KRASLKRGKQ (476 aa)) is 55 kDa regulatory domain. At threonine 1396 the chain carries Phosphothreonine. Residues 1399-1483 (VEMRMAVIRE…EIVNMLEGSG (85 aa)) form the Death domain. 3 positions are modified to phosphoserine: serine 1424, serine 1473, and serine 1482. The disordered stretch occupies residues 1481–1506 (GSGRQSRNLKPERRHGDREYSLSPSQ). Residues 1489 to 1500 (LKPERRHGDREY) are compositionally biased toward basic and acidic residues. 3 positions are modified to phosphoserine: serine 1519, serine 1529, and serine 1612. Disordered stretches follow at residues 1598 to 1720 (EGAH…GPHS) and 1744 to 1767 (VSTR…KEPS). Basic and acidic residues predominate over residues 1637–1647 (EGQRSEKKRQE). Polar residues predominate over residues 1648 to 1666 (VSGTEQDTETEVSLVSGQQ). 3 positions are modified to phosphoserine: serine 1660, serine 1675, and serine 1685. Positions 1681-1694 (VLDRSQARTLDWDK) are enriched in basic and acidic residues. Residues 1695 to 1720 (QGSTAVHPQEATQSSWQEEVTQGPHS) are compositionally biased toward polar residues.

As to quaternary structure, component of the ankyrin-1 complex in the erythrocyte, composed of ANK1, RHCE, RHAG, SLC4A1, EPB42, GYPA, GYPB and AQP1. Interacts with a number of integral membrane proteins and cytoskeletal proteins. Interacts (via N-terminus) with SPTB/spectrin (beta chain). Also interacts with TTN/titin. Isoform Mu17 interacts with OBSCN isoform 3/obscurin. Interacts with HIF1AN. Interacts (via ANK 1-5 repeats) with RHCE; this interaction mediates the primary membrane attachment site for ANK1. Interacts (via ANK 1-2 repeats) with AQP1 (via the N-terminal). Interacts (via ANK 1-13 repeats) with EPB42. Interacts directly with SLC4A1 (via the cytoplasmic domain); this interaction is mediated by the SLC4A1 Band 3-II and Band 3-III dimers. Regulated by phosphorylation. Post-translationally, acylated by palmitic acid group(s). In terms of processing, hydroxylated by HIF1AN at several asparagine and 1 aspartate residue within ANK repeat region; hydroxylation seems to increase the conformational stability of this region and may also modulate protein-protein interactions mediated by the ANK repeat region.

Its subcellular location is the cytoplasm. The protein resides in the cytoskeleton. It is found in the membrane. The protein localises to the sarcoplasmic reticulum. Functionally, component of the ankyrin-1 complex, a multiprotein complex involved in the stability and shape of the erythrocyte membrane. Attaches integral membrane proteins to cytoskeletal elements; binds to the erythrocyte membrane protein band 4.2, to Na-K ATPase, to the lymphocyte membrane protein GP85, and to the cytoskeletal proteins fodrin, tubulin, vimentin and desmin. Erythrocyte ankyrins also link spectrin (beta chain) to the cytoplasmic domain of the erythrocytes anion exchange protein; they retain most or all of these binding functions. This is Ankyrin-1 from Mus musculus (Mouse).